We begin with the raw amino-acid sequence, 552 residues long: CTP synthase (552 aa).

The interval 1-270 is amidoligase domain; it reads MTKFVFVTGG…DGLICDKLRL (270 aa). A CTP-binding site is contributed by Ser-13. A UTP-binding site is contributed by Ser-13. ATP-binding positions include 14–19 and Asp-71; that span reads SLGKGI. Positions 71 and 144 each coordinate Mg(2+). CTP is bound by residues 151–153, 191–196, and Lys-227; these read DIE and KTKPTQ. UTP-binding positions include 191–196 and Lys-227; that span reads KTKPTQ. The region spanning 295 to 548 is the Glutamine amidotransferase type-1 domain; that stretch reads QIAMVGKYVE…IKAAVEHQKP (254 aa). Gly-357 is an L-glutamine binding site. Catalysis depends on Cys-384, which acts as the Nucleophile; for glutamine hydrolysis. Residues 385-388, Glu-408, and Arg-474 contribute to the L-glutamine site; that span reads LGMQ. Catalysis depends on residues His-521 and Glu-523.

The protein belongs to the CTP synthase family. In terms of assembly, homotetramer.

The catalysed reaction is UTP + L-glutamine + ATP + H2O = CTP + L-glutamate + ADP + phosphate + 2 H(+). It catalyses the reaction L-glutamine + H2O = L-glutamate + NH4(+). The enzyme catalyses UTP + NH4(+) + ATP = CTP + ADP + phosphate + 2 H(+). It functions in the pathway pyrimidine metabolism; CTP biosynthesis via de novo pathway; CTP from UDP: step 2/2. Allosterically activated by GTP, when glutamine is the substrate; GTP has no effect on the reaction when ammonia is the substrate. The allosteric effector GTP functions by stabilizing the protein conformation that binds the tetrahedral intermediate(s) formed during glutamine hydrolysis. Inhibited by the product CTP, via allosteric rather than competitive inhibition. Catalyzes the ATP-dependent amination of UTP to CTP with either L-glutamine or ammonia as the source of nitrogen. Regulates intracellular CTP levels through interactions with the four ribonucleotide triphosphates. This Acidovorax ebreus (strain TPSY) (Diaphorobacter sp. (strain TPSY)) protein is CTP synthase.